The primary structure comprises 72 residues: Crustacean hyperglycemic hormone (72 aa).

A Pyrrolidone carboxylic acid; partial modification is found at glutamine 1. 3 disulfide bridges follow: cysteine 7–cysteine 43, cysteine 23–cysteine 39, and cysteine 26–cysteine 52. Valine 72 is modified (valine amide).

The protein belongs to the arthropod CHH/MIH/GIH/VIH hormone family. Post-translationally, the N-terminus forms pyrrolidone carboxylic acid in isoform CHH-II and is free in isoform CHH-I. As to expression, produced by the medulla terminalis X-organ in the eyestalks and transported to the sinus gland where they are stored and released.

The protein resides in the secreted. In terms of biological role, hormone found in the sinus gland of isopods and decapods which controls the blood sugar level. Has a secretagogue action over the amylase released from the midgut gland. May act as a stress hormone and may be involved in the control of molting and reproduction. This is Crustacean hyperglycemic hormone from Cancer pagurus (Rock crab).